The primary structure comprises 500 residues: Glutamate--tRNA ligase (500 aa).

The 'HIGH' region signature appears at 12-22; that stretch reads PSPTGHLHIGN. Positions 259–263 match the 'KMSKS' region motif; the sequence is KLSKR. K262 is an ATP binding site.

It belongs to the class-I aminoacyl-tRNA synthetase family. Glutamate--tRNA ligase type 1 subfamily. Monomer.

The protein resides in the cytoplasm. It catalyses the reaction tRNA(Glu) + L-glutamate + ATP = L-glutamyl-tRNA(Glu) + AMP + diphosphate. Catalyzes the attachment of glutamate to tRNA(Glu) in a two-step reaction: glutamate is first activated by ATP to form Glu-AMP and then transferred to the acceptor end of tRNA(Glu). The sequence is that of Glutamate--tRNA ligase from Lactobacillus delbrueckii subsp. bulgaricus (strain ATCC BAA-365 / Lb-18).